Consider the following 414-residue polypeptide: tRNA N6-adenosine threonylcarbamoyltransferase, mitochondrial (414 aa).

The transit peptide at 1 to 29 (MLMLRRTAGAIPKPPKSKVYGFLRRFSVH) directs the protein to the mitochondrion. Residues Lys-74 and Lys-140 each carry the N6-acetyllysine modification. Positions 147 and 151 each coordinate a divalent metal cation. Substrate is bound by residues 169 to 173 (LISGG) and Asp-202. Lys-203 carries the post-translational modification N6-acetyllysine. Substrate is bound by residues Gly-222 and Glu-226. Residues Lys-230 and Lys-299 each carry the N6-acetyllysine modification. Residues 329 to 330 (SN) and Thr-357 contribute to the substrate site. Residue Asp-358 participates in a divalent metal cation binding.

Belongs to the KAE1 / TsaD family. As to quaternary structure, monomer. A divalent metal cation serves as cofactor.

The protein localises to the mitochondrion. It catalyses the reaction L-threonylcarbamoyladenylate + adenosine(37) in tRNA = N(6)-L-threonylcarbamoyladenosine(37) in tRNA + AMP + H(+). Its function is as follows. Required for the formation of a threonylcarbamoyl group on adenosine at position 37 (t(6)A37) in mitochondrial tRNAs that read codons beginning with adenine. Probably involved in the transfer of the threonylcarbamoyl moiety of threonylcarbamoyl-AMP (TC-AMP) to the N6 group of A37. Involved in mitochondrial genome maintenance. In Mus musculus (Mouse), this protein is tRNA N6-adenosine threonylcarbamoyltransferase, mitochondrial.